Here is a 257-residue protein sequence, read N- to C-terminus: Ribonuclease HII (257 aa).

The RNase H type-2 domain occupies 72 to 257; the sequence is TYIAGIDEVG…FAPIKDMIQK (186 aa). A divalent metal cation is bound by residues aspartate 78, glutamate 79, and aspartate 170.

The protein belongs to the RNase HII family. Mn(2+) serves as cofactor. It depends on Mg(2+) as a cofactor.

Its subcellular location is the cytoplasm. It carries out the reaction Endonucleolytic cleavage to 5'-phosphomonoester.. Functionally, endonuclease that specifically degrades the RNA of RNA-DNA hybrids. This is Ribonuclease HII from Bacillus cereus (strain G9842).